The following is a 389-amino-acid chain: Cobalt-precorrin-5B C(1)-methyltransferase (389 aa).

Residues 1 to 25 (MESRADHAVPADEGHGATEPPRGRD) form a disordered region.

It belongs to the CbiD family.

It carries out the reaction Co-precorrin-5B + S-adenosyl-L-methionine = Co-precorrin-6A + S-adenosyl-L-homocysteine. The protein operates within cofactor biosynthesis; adenosylcobalamin biosynthesis; cob(II)yrinate a,c-diamide from sirohydrochlorin (anaerobic route): step 6/10. Its function is as follows. Catalyzes the methylation of C-1 in cobalt-precorrin-5B to form cobalt-precorrin-6A. The polypeptide is Cobalt-precorrin-5B C(1)-methyltransferase (Nitratidesulfovibrio vulgaris (strain ATCC 29579 / DSM 644 / CCUG 34227 / NCIMB 8303 / VKM B-1760 / Hildenborough) (Desulfovibrio vulgaris)).